We begin with the raw amino-acid sequence, 160 residues long: MKRHAVWSSLFVVILAVLIDQGIKYLVESRMFYGQQIDLLPFLALFRTHNEGIAFSMLAWLHDGGLIAITLAVIAFVLYLWWTNAPERVFARYGFALVIGGAIGNLIDRVMHGYVVDYVLFHLPTWSFAVFNLADAFITIGAGLIILEEFLGWRRERISH.

The next 3 membrane-spanning stretches (helical) occupy residues 6–26, 58–78, and 95–115; these read VWSS…IKYL, LAWL…AFVL, and FALV…HGYV. Active-site residues include Asp-117 and Asp-135. A helical membrane pass occupies residues 127-147; it reads SFAVFNLADAFITIGAGLIIL.

Belongs to the peptidase A8 family.

The protein localises to the cell inner membrane. The enzyme catalyses Release of signal peptides from bacterial membrane prolipoproteins. Hydrolyzes -Xaa-Yaa-Zaa-|-(S,diacylglyceryl)Cys-, in which Xaa is hydrophobic (preferably Leu), and Yaa (Ala or Ser) and Zaa (Gly or Ala) have small, neutral side chains.. It participates in protein modification; lipoprotein biosynthesis (signal peptide cleavage). This protein specifically catalyzes the removal of signal peptides from prolipoproteins. The protein is Lipoprotein signal peptidase of Brucella abortus (strain S19).